A 225-amino-acid polypeptide reads, in one-letter code: Heptaprenylglyceryl phosphate synthase (225 aa).

Lys6 is a binding site for sn-glycerol 1-phosphate. Mg(2+) contacts are provided by Asp8 and Thr34. Residues Tyr153–Gly158, Gly183, and Gly203–Asn204 each bind sn-glycerol 1-phosphate.

This sequence belongs to the GGGP/HepGP synthase family. Group I subfamily. Homodimer. Mg(2+) is required as a cofactor.

It catalyses the reaction sn-glycerol 1-phosphate + all-trans-heptaprenyl diphosphate = 3-heptaprenyl-sn-glycero-1-phosphate + diphosphate. The protein operates within membrane lipid metabolism; glycerophospholipid metabolism. In terms of biological role, prenyltransferase that catalyzes in vivo the transfer of the heptaprenyl moiety of heptaprenyl pyrophosphate (HepPP; 35 carbon atoms) to the C3 hydroxyl of sn-glycerol-1-phosphate (G1P), producing heptaprenylglyceryl phosphate (HepGP). This reaction is an ether-bond-formation step in the biosynthesis of archaea-type G1P-based membrane lipids found in Bacillales. This chain is Heptaprenylglyceryl phosphate synthase, found in Listeria monocytogenes serotype 4b (strain F2365).